Reading from the N-terminus, the 46-residue chain is Protein PsbN (46 aa).

Residues 10 to 30 (VAIAVLAALLGLTGFGVYTAF) form a helical membrane-spanning segment.

The protein belongs to the PsbN family.

The protein resides in the cellular thylakoid membrane. Functionally, may play a role in photosystem I and II biogenesis. The protein is Protein PsbN of Synechococcus sp. (strain CC9311).